Consider the following 120-residue polypeptide: Large ribosomal subunit protein P3 (120 aa).

The interval 83–120 (GGGGAAASGGAAAEAPKEEKKEEEKEESDDDMGFSLFD) is disordered.

This sequence belongs to the eukaryotic ribosomal protein P1/P2 family. Phosphorylated.

Its function is as follows. Plays an important role in the elongation step of protein synthesis. The sequence is that of Large ribosomal subunit protein P3 (RPP3A) from Zea mays (Maize).